The following is a 378-amino-acid chain: Probable endopolygalacturonase NFIA_008150 (378 aa).

The first 19 residues, 1–19, serve as a signal peptide directing secretion; it reads MLKLIGSLVLLASAAEVIA. Positions 20-35 are excised as a propeptide; sequence SPLAESVAPSITLEKR. A disulfide bridge connects residues Cys38 and Cys56. 3 PbH1 repeats span residues 147–169, 170–200, and 201–222; these read TSSS…SING, CDGL…DIGS, and SSNI…AVNS. Catalysis depends on Asp215, which acts as the Proton donor. A disulfide bridge links Cys217 with Cys233. His237 is an active-site residue. 2 PbH1 repeats span residues 247–273 and 281–303; these read RSDN…RIKA and IKGI…LIEQ. Asn254 carries an N-linked (GlcNAc...) asparagine glycan. Asn327 carries an N-linked (GlcNAc...) asparagine glycan. Cystine bridges form between Cys345-Cys350 and Cys369-Cys378.

Belongs to the glycosyl hydrolase 28 family.

It is found in the secreted. It carries out the reaction (1,4-alpha-D-galacturonosyl)n+m + H2O = (1,4-alpha-D-galacturonosyl)n + (1,4-alpha-D-galacturonosyl)m.. Involved in maceration and soft-rotting of plant tissue. Hydrolyzes the 1,4-alpha glycosidic bonds of de-esterified pectate in the smooth region of the plant cell wall. This is Probable endopolygalacturonase NFIA_008150 from Neosartorya fischeri (strain ATCC 1020 / DSM 3700 / CBS 544.65 / FGSC A1164 / JCM 1740 / NRRL 181 / WB 181) (Aspergillus fischerianus).